Reading from the N-terminus, the 916-residue chain is DNA topoisomerase 1 alpha (916 aa).

Residues 1-369 (MGTETVSKPV…SSPSSGDGQK (369 aa)) are disordered. The span at 34–47 (SNSNQSKSNSQRSK) shows a compositional bias: low complexity. Residues 60-76 (PVTSPNGTTPSNKTSIV) are compositionally biased toward polar residues. Residues 77–93 (KSSMPSSSSKASPAKSP) are compositionally biased toward low complexity. The span at 102 to 119 (VKDRSQLQKDQSECKIEH) shows a compositional bias: basic and acidic residues. The span at 130–148 (SILSGNKGPTSSRQVSSPQ) shows a compositional bias: polar residues. Basic and acidic residues predominate over residues 149 to 168 (PEKKNNGDRPLDRASRIIKD). Phosphoserine is present on S170. The segment covering 230–239 (KNSSADQSSL) has biased composition (polar residues). Residues 253 to 267 (MKQDSVKKEIDDKGR) show a composition bias toward basic and acidic residues. Residues 285 to 294 (GTDDDDDDDV) show a composition bias toward acidic residues. Phosphothreonine is present on T286. Over residues 354–366 (YSTSSKSSPSSGD) the composition is skewed to low complexity. Interaction with DNA stretches follow at residues 577–578 (KY), 640–645 (RAGNEK), and 731–733 (TAK). Positions 584–914 (GSSLKGLSDK…MDVEPEYRFS (331 aa)) constitute a Topo IB-type catalytic domain. The stretch at 778-860 (QRTVSKTHGA…ERDMHTKEDL (83 aa)) forms a coiled coil. Y872 functions as the O-(3'-phospho-DNA)-tyrosine intermediate in the catalytic mechanism.

The protein belongs to the type IB topoisomerase family. Interacts with DEK3. In terms of tissue distribution, expressed in inflorescence meristems. Expressed in primordia of sepals, petals, stamens, carpels and ovules. Expressed in midstage embryos.

The protein resides in the nucleus. It catalyses the reaction ATP-independent breakage of single-stranded DNA, followed by passage and rejoining.. Functionally, releases the supercoiling and torsional tension of DNA introduced during the DNA replication and transcription by transiently cleaving and rejoining one strand of the DNA duplex. Introduces a single-strand break via transesterification at a target site in duplex DNA. The scissile phosphodiester is attacked by the catalytic tyrosine of the enzyme, resulting in the formation of a DNA-(3'-phosphotyrosyl)-enzyme intermediate and the expulsion of a 5'-OH DNA strand. The free DNA strand then rotates around the intact phosphodiester bond on the opposing strand, thus removing DNA supercoils. Finally, in the religation step, the DNA 5'-OH attacks the covalent intermediate to expel the active-site tyrosine and restore the DNA phosphodiester backbone. Can complement a TOP1-deficient yeast mutant. Plays a critical role in the maintenance of a regular pattern of organ initiation. Topoisomerases I enzymes (TOP1A and TOP1B) are essential for plant survival. Functions together with the stem cell maintenance gene WUSCHEL (WUS) in stem cell regulation. Required to maintain developmentally regulated gene repression. Functions synergistically with chromatin remodeling factors. Is required for the repression of WUS expression in flower development. Plays a role in polycomb group (PcG) protein-mediated histone H3 trimethylation on 'Lys-27' (H3K27me3) at the WUS gene locus. H3K27me3 induces transcriptional repression of WUS. May assist AGAMOUS (AG) in recruiting PcG proteins to WUS locus. Reduces nucleosome density, especially at genes that are targets of PcG proteins. Plays a role in epigenetic silencing. Involved in RNA-directed DNA methylation (RdDM) by promoting Pol V transcription to generate long non-coding RNA transcripts. Is dispensable for Pol IV-mediated small interfering RNA (siRNA) biogenesis. Promotes transposable element (TE) silencing at endogenous RdDM target loci through histone H3 dimethylation of 'Lys-9' (H3K9me2). Promotes the production of Pol V-dependent long non-coding transcripts that facilitate the recruitment of siRNA-AGO4 and AGO4 occupancy at TEs. In Arabidopsis thaliana (Mouse-ear cress), this protein is DNA topoisomerase 1 alpha.